Reading from the N-terminus, the 320-residue chain is Dual oxidase maturation factor 2 (320 aa).

A helical membrane pass occupies residues 22-42 (VPLLIVILVFLSLAASFLFIL). Residues 43 to 51 (PGIRGHSRW) are Cytoplasmic-facing. A helical membrane pass occupies residues 52–72 (FWLVRVLLSLFIGAEIVAVHF). The Extracellular segment spans residues 73–183 (SGDWFVGRVW…HLAGHYAAAT (111 aa)). N84, N109, and N121 each carry an N-linked (GlcNAc...) asparagine glycan. Residues 184–204 (LWVAFCFWIIANALLSMPAPL) form a helical membrane-spanning segment. Residues 205 to 206 (YG) lie on the Cytoplasmic side of the membrane. Residues 207–227 (GLALLTTGAFTLFGVFAFASI) traverse the membrane as a helical segment. At 228–249 (SSVPLCHFRLGSAVLTPYYGAS) the chain is on the extracellular side. Residues 250–270 (FWLTLATGILSLLLGGAVVIL) traverse the membrane as a helical segment. Topologically, residues 271–320 (HYTRPSALRSFLDLSVKDCSNQAKGNSPLTLNNPQHEQLKSPDLNITTLL) are cytoplasmic.

It belongs to the DUOXA family. In terms of assembly, heterodimer with DUXA2; disulfide-linked. Interacts with CSNK1G2. Post-translationally, N-glycosylated.

The protein localises to the endoplasmic reticulum membrane. Functionally, required for the maturation and the transport from the endoplasmic reticulum to the plasma membrane of functional DUOX2. May play a role in thyroid hormone synthesis. This chain is Dual oxidase maturation factor 2 (Duoxa2), found in Mus musculus (Mouse).